The chain runs to 330 residues: NADH-quinone oxidoreductase subunit H (330 aa).

9 helical membrane-spanning segments follow: residues 5–25 (LFFI…IACL), 44–64 (IGPD…MIKL), 78–98 (FIFL…LAPI), 122–142 (VLYV…AGLA), 156–176 (VMGL…VIMI), 192–212 (IFGW…MASF), 240–260 (MRWA…SIVI), 271–293 (FWFV…FFLW), and 310–330 (CWKI…IALI).

The protein belongs to the complex I subunit 1 family. NDH-1 is composed of 14 different subunits. Subunits NuoA, H, J, K, L, M, N constitute the membrane sector of the complex.

It localises to the cell inner membrane. It catalyses the reaction a quinone + NADH + 5 H(+)(in) = a quinol + NAD(+) + 4 H(+)(out). Its function is as follows. NDH-1 shuttles electrons from NADH, via FMN and iron-sulfur (Fe-S) centers, to quinones in the respiratory chain. The immediate electron acceptor for the enzyme in this species is believed to be ubiquinone. Couples the redox reaction to proton translocation (for every two electrons transferred, four hydrogen ions are translocated across the cytoplasmic membrane), and thus conserves the redox energy in a proton gradient. This subunit may bind ubiquinone. The polypeptide is NADH-quinone oxidoreductase subunit H (Campylobacter curvus (strain 525.92)).